The primary structure comprises 478 residues: Dynein regulatory complex subunit 4 (478 aa).

The segment covering methionine 1–alanine 12 has biased composition (basic residues). Residues methionine 1–glutamate 33 are disordered. The regulates microtubule-binding stretch occupies residues methionine 1–threonine 114. A microtubule-binding region spans residues glutamate 115–methionine 258. Residues leucine 242 to valine 427 adopt a coiled-coil conformation. Residues glutamine 357–threonine 478 form an interaction with SMO region.

Belongs to the DRC4 family. As to quaternary structure, component of the nexin-dynein regulatory complex (N-DRC). Interacts with microtubules. Interacts with SMO. Interacts (via coiled-coil domains) with RAB3B (in GTP-bound form). Interacts with DRC1. Interacts with DRC7. Expressed in respiratory epithelial cells (at protein level). Expressed in the heart, skeletal muscle, pancreas, liver, brain, trachea and lung. Weakly or not expressed in placenta and kidney.

The protein resides in the cytoplasm. It localises to the cytoskeleton. It is found in the cell projection. The protein localises to the cilium. Its subcellular location is the flagellum. The protein resides in the cilium axoneme. It localises to the cilium basal body. It is found in the golgi apparatus. The protein localises to the flagellum axoneme. Functionally, component of the nexin-dynein regulatory complex (N-DRC), a key regulator of ciliary/flagellar motility which maintains the alignment and integrity of the distal axoneme and regulates microtubule sliding in motile axonemes. Plays an important role in the assembly of the N-DRC linker. Plays dual roles at both the primary (or non-motile) cilia to regulate hedgehog signaling and in motile cilia to coordinate cilia movement. Required for proper motile cilia functioning. Positively regulates ciliary smoothened (SMO)-dependent Hedgehog (Hh) signaling pathway by facilitating the trafficking of SMO into the cilium and the stimulation of SMO activity in a GRK2-dependent manner. The chain is Dynein regulatory complex subunit 4 (GAS8) from Homo sapiens (Human).